The primary structure comprises 306 residues: Glutathione transport system permease protein GsiC (306 aa).

Topologically, residues 1 to 8 (MLNYVLKR) are cytoplasmic. The chain crosses the membrane as a helical span at residues 9–29 (LLGLIPTLLIVAVLVFLFVHL). Over 30–102 (LPGDPARLIA…SRFLPTLWLT (73 aa)) the chain is Periplasmic. The region spanning 95-292 (FLPTLWLTIT…LEFILINLVV (198 aa)) is the ABC transmembrane type-1 domain. A helical transmembrane segment spans residues 103-123 (ITSMIWAVLFGMAIGIAAAVW). Residues 124 to 134 (RNRWPDRLGMT) are Cytoplasmic-facing. A helical membrane pass occupies residues 135 to 155 (LAVTGISFPAFALGMLLMQIF). Topologically, residues 156-168 (SVDLGWLPTVGAD) are periplasmic. Residues 169-189 (SWQHYILPSLTLGAAVASVMA) form a helical membrane-spanning segment. Topologically, residues 190 to 228 (RFTRSSFVDVLSEDYMRTARAKGVSETWVVLKHGLRNAM) are cytoplasmic. The chain crosses the membrane as a helical span at residues 229–249 (IPVVTMMGLQFGFLLGGSIVV). At 250 to 278 (EKVFNWPGLGRLLVDSVDMRDYPVIQAEV) the chain is on the periplasmic side. The chain crosses the membrane as a helical span at residues 279–299 (LLFSLEFILINLVVDVLYAAI). The Cytoplasmic portion of the chain corresponds to 300 to 306 (NPAIRYK).

This sequence belongs to the binding-protein-dependent transport system permease family. In terms of assembly, the complex is composed of two ATP-binding proteins (GsiA), two transmembrane proteins (GsiC and GsiD) and a solute-binding protein (GsiB).

The protein localises to the cell inner membrane. Its function is as follows. Part of the ABC transporter complex GsiABCD involved in glutathione import. Probably responsible for the translocation of the substrate across the membrane. The protein is Glutathione transport system permease protein GsiC of Salmonella typhimurium (strain LT2 / SGSC1412 / ATCC 700720).